Here is a 37-residue protein sequence, read N- to C-terminus: Large ribosomal subunit protein bL36 (37 aa).

Belongs to the bacterial ribosomal protein bL36 family.

The chain is Large ribosomal subunit protein bL36 from Desulforudis audaxviator (strain MP104C).